Reading from the N-terminus, the 177-residue chain is uncharacterized protein (177 aa).

To M.jannaschii MJ0628.

This is an uncharacterized protein from Methanocaldococcus jannaschii (strain ATCC 43067 / DSM 2661 / JAL-1 / JCM 10045 / NBRC 100440) (Methanococcus jannaschii).